The sequence spans 158 residues: Transcriptional repressor NrdR (158 aa).

Residues 1–22 (MRCPFCGSDDTQVKDSRPAEDN) are disordered. The segment at 3 to 34 (CPFCGSDDTQVKDSRPAEDNSAIRRRRICPDC) is a zinc-finger region. The segment covering 11 to 22 (TQVKDSRPAEDN) has biased composition (basic and acidic residues). The ATP-cone domain maps to 49–139 (LTVLKKTGRK…VYRDFSHAED (91 aa)).

The protein belongs to the NrdR family. Requires Zn(2+) as cofactor.

Functionally, negatively regulates transcription of bacterial ribonucleotide reductase nrd genes and operons by binding to NrdR-boxes. This chain is Transcriptional repressor NrdR, found in Allorhizobium ampelinum (strain ATCC BAA-846 / DSM 112012 / S4) (Agrobacterium vitis (strain S4)).